A 449-amino-acid polypeptide reads, in one-letter code: Cysteine--tRNA ligase (449 aa).

Cys-30 contributes to the Zn(2+) binding site. A 'HIGH' region motif is present at residues 32 to 42; the sequence is PTVYDRAHLGN. Residues Cys-210, His-235, and Glu-239 each coordinate Zn(2+). The short motif at 268–272 is the 'KMSKS' region element; it reads KMSKS. Lys-271 lines the ATP pocket.

Belongs to the class-I aminoacyl-tRNA synthetase family. As to quaternary structure, monomer. The cofactor is Zn(2+).

It localises to the cytoplasm. The catalysed reaction is tRNA(Cys) + L-cysteine + ATP = L-cysteinyl-tRNA(Cys) + AMP + diphosphate. This chain is Cysteine--tRNA ligase, found in Acidiphilium cryptum (strain JF-5).